A 1048-amino-acid polypeptide reads, in one-letter code: Copper-dependent transcription factor 1 (1048 aa).

The segment at residues 1–40 (MVLINDKKFACEKCIKGHRVSACTHTDRPLFEVKKKGRPS) is a DNA-binding region (copper-fist). Positions 11, 14, 23, and 25 each coordinate Zn(2+). Residues 85-99 (ANESGGASATANTSA) show a composition bias toward low complexity. 2 disordered regions span residues 85 to 117 (ANES…PTFP) and 178 to 273 (HSGH…RPPV). Positions 211 to 222 (TRNSPTSINSSE) are enriched in polar residues. The short motif at 348-362 (CMCGDDCSCPGCATH) is the CRM-I element. The short motif at 455 to 482 (CCGGKCGCPPGECACTKQCCGCCGECTC) is the CRM-II element. Disordered regions lie at residues 506-702 (SSCG…PLNS) and 835-876 (GPSG…WKFP). Composition is skewed to polar residues over residues 527–536 (QIPQSVSPTS), 550–565 (PVST…SFNT), 629–645 (GSMT…GVRR), 664–682 (SIQS…SNQI), and 692–702 (APSQMTAPLNS). Residues 835–845 (GPSGPSAIPAT) are compositionally biased toward low complexity. Over residues 846–868 (NIPSRHTTPQASRPLTPPESSFT) the composition is skewed to polar residues.

The protein resides in the nucleus. The protein localises to the cytoplasm. Its subcellular location is the cell cortex. In terms of biological role, transcription factor that regulates copper acquisition and homeostasis, and which plays a central role in fungal pathogenesis during neurologic infection. The transcriptional regulation exerted by CUF1 is intrinsically complex since it acts as a dual sensor of copper levels, responsible for expression of a set of copper-specific copper transporters, CTR1 and CTR4, at low copper concentrations, and 2 metallothioneins, CMT1 and CMT2, at high copper concentrations. Positively regulates the expression of the copper acquisition factor BIM1 under copper-limiting conditions. Also positively regulates the expression of super oxide dismutase SOD2 isoform 2 during oxidative stress and copper-limiting conditions. Negatively regulates the expression of super oxide dismutase SOD1 during copper-limiting conditions. Also regulates ATM1, an ABC transporter with functions in the iron-sulfur clusters (ISC) export machinery, during copper stress. Another target of CUF1 is the gene encoding the laccase LAC1. Binds promoters of target genes at Cu-responsive elements (CuREs) that contain a variable A/T rich 5' region followed by the core consensus sequence 5'-G(G/C)CTC(A/G)-3'. Negatively regulates capsule biosynthesis, probably via modulating iron acquisition through the high-affinity iron uptake pathway. The protein is Copper-dependent transcription factor 1 of Cryptococcus neoformans var. grubii serotype A (strain H99 / ATCC 208821 / CBS 10515 / FGSC 9487) (Filobasidiella neoformans var. grubii).